Consider the following 203-residue polypeptide: Small ribosomal subunit protein uS5 (203 aa).

Residues 49-112 enclose the S5 DRBM domain; it reads FEERVVKIKR…KNANNNLIKV (64 aa).

It belongs to the universal ribosomal protein uS5 family. As to quaternary structure, part of the 30S ribosomal subunit. Contacts proteins S4 and S8.

In terms of biological role, with S4 and S12 plays an important role in translational accuracy. Located at the back of the 30S subunit body where it stabilizes the conformation of the head with respect to the body. This is Small ribosomal subunit protein uS5 from Ureaplasma parvum serovar 3 (strain ATCC 700970).